Consider the following 181-residue polypeptide: Lectin beta-1 and beta-2 chains (181 aa).

Glutamate 119 and aspartate 121 together coordinate Mn(2+). Residues aspartate 121, phenylalanine 123, asparagine 125, and aspartate 129 each contribute to the Ca(2+) site. Residues aspartate 129 and histidine 136 each contribute to the Mn(2+) site.

The protein belongs to the leguminous lectin family. In terms of assembly, tetramer of two alpha and two beta chains.

The protein is Lectin beta-1 and beta-2 chains of Lathyrus ochrus (Cyprus-vetch).